Reading from the N-terminus, the 1014-residue chain is Disease resistance protein RGA4 (1014 aa).

The interval M1 to G182 is structured coiled coil (CC) domain. Residues R105–A145 are a coiled coil. Residues E189–V466 enclose the NB-ARC domain. LRR repeat units follow at residues R484–M506, M507–L530, P531–G552, L580–L602, V603–L624, K625–L647, M701–E725, P762–L784, R785–N807, L808–R833, and L854–C877.

The protein belongs to the disease resistance NB-LRR family. In terms of tissue distribution, expressed in leaves.

Functionally, probable disease resistance protein. Resistance proteins guard the plant against pathogens that contain an appropriate avirulence protein via an indirect interaction with this avirulence protein. That triggers a defense system including the hypersensitive response, which restricts the pathogen growth. At the opposite of cultivars Aichi asahi and Sasanishiki, the cultivars Nipponbare, Mokoto and Hitomebore don't recognize the effector avirulence protein AVR-Pia from M.oryzae. This chain is Disease resistance protein RGA4, found in Oryza sativa subsp. japonica (Rice).